Reading from the N-terminus, the 527-residue chain is Homeobox protein NOBOX (527 aa).

Disordered regions lie at residues 1–126 (MEPT…DLKK), 194–245 (VEKL…DVFP), 271–306 (VTPP…RDVP), and 488–527 (ETGS…GAKE). Positions 136–195 (RKKTRTLYRSDQLEELERIFQEDHYPDSDKRHEISQMVGVTPQRIMVWFQNRRAKWRKVE) form a DNA-binding region, homeobox. Positions 194–203 (VEKLNEKETK) are enriched in basic and acidic residues. The segment covering 488–506 (ETGSSLSKMSDEQTSSSLE) has biased composition (polar residues). Over residues 511–527 (EEVRDKNKNSHAAGAKE) the composition is skewed to basic and acidic residues.

In terms of tissue distribution, specifically expressed in ovaries and testes. In ovaries, expressed in oocytes from primordial through antral follicles but not in granulosa cells, theca cells and corpora lutea.

Its subcellular location is the nucleus. Its function is as follows. Transcription factor which plays an essential role in postnatal follicle development. Binds preferentially to the DNA sequences 5'-TAATTG-3', 5'-TAGTTG-3' and 5'-TAATTA-3'. Directly regulates the transcription of POU5F1 and GDF9 during early folliculogenesis. The polypeptide is Homeobox protein NOBOX (Nobox) (Mus musculus (Mouse)).